Reading from the N-terminus, the 175-residue chain is MNLKEKFRHVLNFPKEGIDFIDITTVLQDKDAFKYAIDSLVNLVKDLDFELIVGPESRGFIFGAPVAYVLNKGLVLVRKKGKLPYKTVSVEYELEYGKDVLEMHIDAIKPGQKVVIIDDLLATGGTTLSNIKLVEKLGGEVVGIAYLVELTYLGGRENLKGYDVRSVVQFESSLI.

The protein belongs to the purine/pyrimidine phosphoribosyltransferase family. As to quaternary structure, homodimer.

It localises to the cytoplasm. The enzyme catalyses AMP + diphosphate = 5-phospho-alpha-D-ribose 1-diphosphate + adenine. It participates in purine metabolism; AMP biosynthesis via salvage pathway; AMP from adenine: step 1/1. Its function is as follows. Catalyzes a salvage reaction resulting in the formation of AMP, that is energically less costly than de novo synthesis. In Caldicellulosiruptor bescii (strain ATCC BAA-1888 / DSM 6725 / KCTC 15123 / Z-1320) (Anaerocellum thermophilum), this protein is Adenine phosphoribosyltransferase.